Reading from the N-terminus, the 124-residue chain is Seripauperin-23 (124 aa).

Positions 1–20 (MVKLTSIVAGVAAIAAGVAA) are cleaved as a signal peptide.

The protein belongs to the SRP1/TIP1 family. Seripauperin subfamily. O-glycosylated.

It is found in the secreted. The protein localises to the cell wall. Its function is as follows. Component of the cell wall. This chain is Seripauperin-23 (PAU23), found in Saccharomyces cerevisiae (strain ATCC 204508 / S288c) (Baker's yeast).